A 310-amino-acid chain; its full sequence is p-hydroxybenzoic acid efflux pump subunit AaeA (310 aa).

The chain crosses the membrane as a helical span at residues 12–32; the sequence is VITLLLVIIAIVLIFRIWVFY.

Belongs to the membrane fusion protein (MFP) (TC 8.A.1) family.

The protein localises to the cell inner membrane. In terms of biological role, forms an efflux pump with AaeB. This Erwinia tasmaniensis (strain DSM 17950 / CFBP 7177 / CIP 109463 / NCPPB 4357 / Et1/99) protein is p-hydroxybenzoic acid efflux pump subunit AaeA.